Consider the following 544-residue polypeptide: Spore germination protein KA (544 aa).

The tract at residues 1–36 is disordered; the sequence is MPLFSKRKNNTDSKDKQNTDERNQEQQQEKERPVLI. Residues 9–33 are compositionally biased toward basic and acidic residues; sequence NNTDSKDKQNTDERNQEQQQEKERP. The next 5 membrane-spanning stretches (helical) occupy residues 279–299, 321–341, 392–412, 416–436, and 443–463; these read FAII…FVQF, VLVF…TTFH, AVSI…GIVS, VIIV…AMAI, and FIFI…GIIM. Over residues 504-523 the composition is skewed to basic and acidic residues; that stretch reads KRPESVSKEDKVRQGKDQRP. A disordered region spans residues 504-544; the sequence is KRPESVSKEDKVRQGKDQRPEPAASRGMVNKDLEEGDQNGT.

The protein belongs to the GerABKA family.

It is found in the cell membrane. Functionally, involved in the germination response to the combination of glucose, fructose, L-asparagine, and KCl. This is Spore germination protein KA (gerKA) from Bacillus subtilis (strain 168).